The following is a 766-amino-acid chain: Ribonuclease Z, mitochondrial (766 aa).

The transit peptide at 1–25 (MYLVKSAGSPIYRTLRTLTTSNLMA) directs the protein to the mitochondrion.

It belongs to the RNase Z family. In terms of assembly, homodimer. Zn(2+) is required as a cofactor.

It is found in the nucleus. It localises to the mitochondrion. It catalyses the reaction Endonucleolytic cleavage of RNA, removing extra 3' nucleotides from tRNA precursor, generating 3' termini of tRNAs. A 3'-hydroxy group is left at the tRNA terminus and a 5'-phosphoryl group is left at the trailer molecule.. Zinc phosphodiesterase, which displays some tRNA 3'-processing endonuclease activity of nuclear and mitochondrial pre-tRNA. Probably involved in tRNA maturation, by removing a 3'-trailer from precursor tRNA. May participate in tRNA processing in the developing embryo. The chain is Ribonuclease Z, mitochondrial from Drosophila melanogaster (Fruit fly).